Consider the following 1755-residue polypeptide: Transposon Ty1-GR1 Gag-Pol polyprotein (1755 aa).

Residues 1–16 are compositionally biased toward low complexity; sequence MESQQLSQHSHISHGS. 3 disordered regions span residues 1–93, 126–173, and 352–421; these read MESQ…MMTQ, PQSQ…RPPP, and GSRN…SKST. Composition is skewed to polar residues over residues 48–60, 71–93, and 127–152; these read TKAN…TPAS, SPQT…MMTQ, and QSQF…GNTF. A compositionally biased stretch (low complexity) spans 153 to 165; it reads TDSSSADSDMTST. The RNA-binding stretch occupies residues 299-401; the sequence is NNGIHINNKV…NSKSKTARAH (103 aa). Over residues 402–418 the composition is skewed to low complexity; sequence NVSTSNNSPSTDNDSIS. The residue at position 416 (serine 416) is a Phosphoserine. Catalysis depends on aspartate 461, which acts as the For protease activity; shared with dimeric partner. The segment at 583–640 is integrase-type zinc finger-like; that stretch reads NVHTSESTRKYPYPFIHRMLAHANAQTIRYSLKNNTITYFNESDVDWSSAIDYQCPDC. One can recognise an Integrase catalytic domain in the interval 660-835; the sequence is NSYEPFQYLH…AGLDISTLLP (176 aa). Mg(2+)-binding residues include aspartate 671 and aspartate 736. 3 disordered regions span residues 956-1087, 1092-1111, and 1130-1187; these read SKAV…ETEK, RSPS…NIVP, and DLPL…DNET. Positions 960 to 969 are enriched in low complexity; sequence SPTDSTPPST. The span at 1005 to 1015 shows a compositional bias: polar residues; the sequence is STPQISNIEST. Residues 1038–1053 show a composition bias toward basic and acidic residues; sequence ESSHASKSKDFRHSDS. 2 stretches are compositionally biased toward polar residues: residues 1054–1082 and 1101–1111; these read YSEN…QISD and PENNSSHNIVP. The Bipartite nuclear localization signal signature appears at 1178 to 1212; it reads KKRSLEDNETEIKVSRDTWNTKNMRSLEPPRSKKR. One can recognise a Reverse transcriptase Ty1/copia-type domain in the interval 1338-1476; it reads NNYYITQLDI…DILGLEIKYQ (139 aa). Residues aspartate 1346, aspartate 1427, aspartate 1428, aspartate 1610, glutamate 1652, and aspartate 1685 each contribute to the Mg(2+) site. The region spanning 1610 to 1752 is the RNase H Ty1/copia-type domain; that stretch reads DASYGNQPYY…IKTFKLLTNK (143 aa).

As to quaternary structure, the capsid protein forms a homotrimer, from which the VLPs are assembled. The protease is a homodimer, whose active site consists of two apposed aspartic acid residues. Post-translationally, initially, virus-like particles (VLPs) are composed of the structural unprocessed proteins Gag and Gag-Pol, and also contain the host initiator methionine tRNA (tRNA(i)-Met) which serves as a primer for minus-strand DNA synthesis, and a dimer of genomic Ty RNA. Processing of the polyproteins occurs within the particle and proceeds by an ordered pathway, called maturation. First, the protease (PR) is released by autocatalytic cleavage of the Gag-Pol polyprotein yielding capsid protein p45 and a Pol-p154 precursor protein. This cleavage is a prerequisite for subsequent processing of Pol-p154 at the remaining sites to release the mature structural and catalytic proteins. Maturation takes place prior to the RT reaction and is required to produce transposition-competent VLPs.

The protein localises to the cytoplasm. Its subcellular location is the nucleus. The catalysed reaction is DNA(n) + a 2'-deoxyribonucleoside 5'-triphosphate = DNA(n+1) + diphosphate. It carries out the reaction Endonucleolytic cleavage to 5'-phosphomonoester.. In terms of biological role, capsid protein (CA) is the structural component of the virus-like particle (VLP), forming the shell that encapsulates the retrotransposons dimeric RNA genome. The particles are assembled from trimer-clustered units and there are holes in the capsid shells that allow for the diffusion of macromolecules. CA also has nucleocapsid-like chaperone activity, promoting primer tRNA(i)-Met annealing to the multipartite primer-binding site (PBS), dimerization of Ty1 RNA and initiation of reverse transcription. Functionally, the aspartyl protease (PR) mediates the proteolytic cleavages of the Gag and Gag-Pol polyproteins after assembly of the VLP. Its function is as follows. Reverse transcriptase/ribonuclease H (RT) is a multifunctional enzyme that catalyzes the conversion of the retro-elements RNA genome into dsDNA within the VLP. The enzyme displays a DNA polymerase activity that can copy either DNA or RNA templates, and a ribonuclease H (RNase H) activity that cleaves the RNA strand of RNA-DNA heteroduplexes during plus-strand synthesis and hydrolyzes RNA primers. The conversion leads to a linear dsDNA copy of the retrotransposon that includes long terminal repeats (LTRs) at both ends. Integrase (IN) targets the VLP to the nucleus, where a subparticle preintegration complex (PIC) containing at least integrase and the newly synthesized dsDNA copy of the retrotransposon must transit the nuclear membrane. Once in the nucleus, integrase performs the integration of the dsDNA into the host genome. The sequence is that of Transposon Ty1-GR1 Gag-Pol polyprotein (TY1B-GR1) from Saccharomyces cerevisiae (strain ATCC 204508 / S288c) (Baker's yeast).